A 228-amino-acid chain; its full sequence is 5'-methylthioadenosine/S-adenosylhomocysteine nucleosidase (228 aa).

The active-site Proton acceptor is E11. Substrate contacts are provided by residues G77, I151, and 172-173 (ME). Residue D196 is the Proton donor of the active site.

It belongs to the PNP/UDP phosphorylase family. MtnN subfamily.

The enzyme catalyses S-adenosyl-L-homocysteine + H2O = S-(5-deoxy-D-ribos-5-yl)-L-homocysteine + adenine. The catalysed reaction is S-methyl-5'-thioadenosine + H2O = 5-(methylsulfanyl)-D-ribose + adenine. It carries out the reaction 5'-deoxyadenosine + H2O = 5-deoxy-D-ribose + adenine. It participates in amino-acid biosynthesis; L-methionine biosynthesis via salvage pathway; S-methyl-5-thio-alpha-D-ribose 1-phosphate from S-methyl-5'-thioadenosine (hydrolase route): step 1/2. Catalyzes the irreversible cleavage of the glycosidic bond in both 5'-methylthioadenosine (MTA) and S-adenosylhomocysteine (SAH/AdoHcy) to adenine and the corresponding thioribose, 5'-methylthioribose and S-ribosylhomocysteine, respectively. Also cleaves 5'-deoxyadenosine, a toxic by-product of radical S-adenosylmethionine (SAM) enzymes, into 5-deoxyribose and adenine. This Staphylococcus epidermidis (strain ATCC 12228 / FDA PCI 1200) protein is 5'-methylthioadenosine/S-adenosylhomocysteine nucleosidase.